Here is a 640-residue protein sequence, read N- to C-terminus: Threonine--tRNA ligase (640 aa).

A TGS domain is found at 1–61 (MPAITLPDGS…DADARLRFIT (61 aa)). The catalytic stretch occupies residues 243-536 (DHRKIGRQMD…LIENCAGRFP (294 aa)). 3 residues coordinate Zn(2+): Cys336, His387, and His513.

The protein belongs to the class-II aminoacyl-tRNA synthetase family. Homodimer. The cofactor is Zn(2+).

It localises to the cytoplasm. The enzyme catalyses tRNA(Thr) + L-threonine + ATP = L-threonyl-tRNA(Thr) + AMP + diphosphate + H(+). Catalyzes the attachment of threonine to tRNA(Thr) in a two-step reaction: L-threonine is first activated by ATP to form Thr-AMP and then transferred to the acceptor end of tRNA(Thr). Also edits incorrectly charged L-seryl-tRNA(Thr). The protein is Threonine--tRNA ligase of Acidiphilium cryptum (strain JF-5).